The following is a 430-amino-acid chain: MNNKKTLLAVAISGMMFATSAAAVDFHGYARSGIGWTSGGGEQTALQVNGGGSKYRLGNETETYVELKLGQELFKEGNKSIYLDSNIAYSVDQQVDWEATDPALREINVQFKNFAEDLLPDATLWAGKRFYQRHDVHMNDFYYWDISGPGAGVENINLGFGKLSLAVTRNTEGGATATYGTDKVYYIDDNGQIQSRFEERKANVYNDVFDIRLAELNVNPNGKLEIGFDYGNAHTKNGYYLEPGASKNGYMITLEHTQGEFFGGFNKFVAQYATDSMTSWNTGHSQGSSVNNNGHMLRLIDHGVVQFSPKVEMMYALIYEKTDLDNNQGKTWYSAGIRPMYKWNKTMSTLIELGYDRIKDQSSGEKNDLAKITLAQQWQAGDSIWARPAIRVFGTYGRWNDKFNITDRTNAGYKAKDAEFVAGVQFEAWW.

An N-terminal signal peptide occupies residues 1–23 (MNNKKTLLAVAISGMMFATSAAA).

It belongs to the porin LamB (TC 1.B.3) family. In terms of assembly, homotrimer formed of three 18-stranded antiparallel beta-barrels, containing three independent channels.

Its subcellular location is the cell outer membrane. It catalyses the reaction beta-maltose(in) = beta-maltose(out). In terms of biological role, involved in the transport of maltose and maltodextrins. The polypeptide is Maltoporin (Actinobacillus succinogenes (strain ATCC 55618 / DSM 22257 / CCUG 43843 / 130Z)).